We begin with the raw amino-acid sequence, 695 residues long: Elongation factor G (695 aa).

Residues 9–283 enclose the tr-type G domain; it reads EKIRNIGIVA…AVIDYLPSPL (275 aa). Residues 18–25, 82–86, and 136–139 contribute to the GTP site; these read AHIDAGKT, DTPGH, and NKMD.

The protein belongs to the TRAFAC class translation factor GTPase superfamily. Classic translation factor GTPase family. EF-G/EF-2 subfamily.

Its subcellular location is the cytoplasm. In terms of biological role, catalyzes the GTP-dependent ribosomal translocation step during translation elongation. During this step, the ribosome changes from the pre-translocational (PRE) to the post-translocational (POST) state as the newly formed A-site-bound peptidyl-tRNA and P-site-bound deacylated tRNA move to the P and E sites, respectively. Catalyzes the coordinated movement of the two tRNA molecules, the mRNA and conformational changes in the ribosome. The sequence is that of Elongation factor G from Petrotoga mobilis (strain DSM 10674 / SJ95).